The chain runs to 395 residues: L-methionine gamma-lyase (395 aa).

Residues 56 to 58 (YTR) and 86 to 87 (GM) contribute to the pyridoxal 5'-phosphate site. Tyr-111 serves as a coordination point for substrate. 206-208 (SAT) provides a ligand contact to pyridoxal 5'-phosphate. An N6-(pyridoxal phosphate)lysine modification is found at Lys-209. Arg-373 is a binding site for substrate.

This sequence belongs to the trans-sulfuration enzymes family. L-methionine gamma-lyase subfamily. As to quaternary structure, homotetramer. Pyridoxal 5'-phosphate is required as a cofactor.

The catalysed reaction is L-methionine + H2O = methanethiol + 2-oxobutanoate + NH4(+). It catalyses the reaction L-homocysteine + H2O = 2-oxobutanoate + hydrogen sulfide + NH4(+) + H(+). The enzyme catalyses L-cysteine + H2O = hydrogen sulfide + pyruvate + NH4(+) + H(+). Functionally, catalyzes the alpha,gamma-elimination of L-methionine to produce methanethiol, 2-oxobutanoate and ammonia, and that of L-homocysteine. Can also use L-cysteine as substrate, catalyzing its alpha,beta-elimination; this activity seems to only minimally contribute to the production of hydrogen sulfide (H2S) by F.nucleatum in the oral cavity, which is toxic for a large variety of cells in periodontal regions. In Fusobacterium nucleatum subsp. nucleatum (strain ATCC 25586 / DSM 15643 / BCRC 10681 / CIP 101130 / JCM 8532 / KCTC 2640 / LMG 13131 / VPI 4355), this protein is L-methionine gamma-lyase.